We begin with the raw amino-acid sequence, 111 residues long: VLLKMKEIADAYLGKKVTDVVITVPAYFNDSQRQATKDAGVIAGLNVLRIINEPNAAAIAYGLDKKVEKEKNVLIFDLGGGTFDVSILAIEDGIFEVKSTAGDTHLGGEDF.

The protein belongs to the heat shock protein 70 family.

The polypeptide is Heat shock 70 kDa protein (HSP70) (Hydra oligactis (Brown hydra)).